Reading from the N-terminus, the 451-residue chain is UDP-N-acetylmuramate--L-alanine ligase (451 aa).

Residue glycine 110–threonine 116 participates in ATP binding.

It belongs to the MurCDEF family.

It localises to the cytoplasm. It catalyses the reaction UDP-N-acetyl-alpha-D-muramate + L-alanine + ATP = UDP-N-acetyl-alpha-D-muramoyl-L-alanine + ADP + phosphate + H(+). The protein operates within cell wall biogenesis; peptidoglycan biosynthesis. Its function is as follows. Cell wall formation. The protein is UDP-N-acetylmuramate--L-alanine ligase of Francisella tularensis subsp. tularensis (strain SCHU S4 / Schu 4).